The primary structure comprises 208 residues: Small ribosomal subunit protein uS4 (208 aa).

Residues 98–160 (RRIDNTVYRL…SRQLQMINEA (63 aa)) enclose the S4 RNA-binding domain.

The protein belongs to the universal ribosomal protein uS4 family. In terms of assembly, part of the 30S ribosomal subunit. Contacts protein S5. The interaction surface between S4 and S5 is involved in control of translational fidelity.

Its function is as follows. One of the primary rRNA binding proteins, it binds directly to 16S rRNA where it nucleates assembly of the body of the 30S subunit. With S5 and S12 plays an important role in translational accuracy. This Syntrophobacter fumaroxidans (strain DSM 10017 / MPOB) protein is Small ribosomal subunit protein uS4.